The sequence spans 448 residues: Two-component sensor PhoQ (448 aa).

Residues 1-33 (MIRSLRIRLMLGAAALAVLFMLALLPALQRAFG) form the signal peptide. A helical membrane pass occupies residues 169 to 189 (WLGGALLVLLGLLWLGLTWGF). The HAMP domain occupies 186–237 (TWGFRAMRGLSSELDQIESGERESLSEEHPRELLRLTHSLNRLLRSEHKQRE). The 204-residue stretch at 245–448 (DLAHSLKTPL…ACFRIRFATV (204 aa)) folds into the Histidine kinase domain. H248 carries the post-translational modification Phosphohistidine; by autocatalysis.

The protein localises to the membrane. It catalyses the reaction ATP + protein L-histidine = ADP + protein N-phospho-L-histidine.. Its function is as follows. Member of the two-component regulatory system PhoP/PhoQ that plays a role in the regulation of resistance towards polymyxin B and cationic antimicrobial peptides in response to limiting concentrations of Mg(2+). May function as a membrane-associated protein kinase that phosphorylates PhoP in response to environmental signals leading to activation of specific gene promoters. The protein is Two-component sensor PhoQ (phoQ) of Pseudomonas aeruginosa (strain ATCC 15692 / DSM 22644 / CIP 104116 / JCM 14847 / LMG 12228 / 1C / PRS 101 / PAO1).